The primary structure comprises 388 residues: GTPase Obg (388 aa).

The Obg domain occupies M1–L159. An OBG-type G domain is found at A160–A333. Residues G166 to S173, F191 to V195, D213 to G216, N283 to D286, and S314 to Y316 contribute to the GTP site. The Mg(2+) site is built by S173 and T193.

It belongs to the TRAFAC class OBG-HflX-like GTPase superfamily. OBG GTPase family. In terms of assembly, monomer. It depends on Mg(2+) as a cofactor.

Its subcellular location is the cytoplasm. An essential GTPase which binds GTP, GDP and possibly (p)ppGpp with moderate affinity, with high nucleotide exchange rates and a fairly low GTP hydrolysis rate. Plays a role in control of the cell cycle, stress response, ribosome biogenesis and in those bacteria that undergo differentiation, in morphogenesis control. The polypeptide is GTPase Obg (Shewanella putrefaciens (strain CN-32 / ATCC BAA-453)).